Here is a 176-residue protein sequence, read N- to C-terminus: Large ribosomal subunit protein uL10 (176 aa).

It belongs to the universal ribosomal protein uL10 family. In terms of assembly, part of the ribosomal stalk of the 50S ribosomal subunit. The N-terminus interacts with L11 and the large rRNA to form the base of the stalk. The C-terminus forms an elongated spine to which L12 dimers bind in a sequential fashion forming a multimeric L10(L12)X complex.

Its function is as follows. Forms part of the ribosomal stalk, playing a central role in the interaction of the ribosome with GTP-bound translation factors. This Coprothermobacter proteolyticus (strain ATCC 35245 / DSM 5265 / OCM 4 / BT) protein is Large ribosomal subunit protein uL10.